We begin with the raw amino-acid sequence, 130 residues long: Small ribosomal subunit protein uS9 (130 aa).

A disordered region spans residues 98-130 (LKRAGLLTRDPRMKERKKPGLKKARRSPQFSKR). Over residues 111–130 (KERKKPGLKKARRSPQFSKR) the composition is skewed to basic residues.

It belongs to the universal ribosomal protein uS9 family.

This Staphylococcus epidermidis (strain ATCC 35984 / DSM 28319 / BCRC 17069 / CCUG 31568 / BM 3577 / RP62A) protein is Small ribosomal subunit protein uS9.